The chain runs to 287 residues: Small ribosomal subunit biogenesis GTPase RsgA (287 aa).

One can recognise a CP-type G domain in the interval 63–223; it reads KNLLIRPKVA…VIDTPGFGSL (161 aa). GTP contacts are provided by residues 113 to 116 and 166 to 174; these read SKMD and GQSGVGKST. 4 residues coordinate Zn(2+): Cys246, Cys251, His253, and Cys259.

The protein belongs to the TRAFAC class YlqF/YawG GTPase family. RsgA subfamily. In terms of assembly, monomer. Associates with 30S ribosomal subunit, binds 16S rRNA. Zn(2+) is required as a cofactor.

Its subcellular location is the cytoplasm. One of several proteins that assist in the late maturation steps of the functional core of the 30S ribosomal subunit. Helps release RbfA from mature subunits. May play a role in the assembly of ribosomal proteins into the subunit. Circularly permuted GTPase that catalyzes slow GTP hydrolysis, GTPase activity is stimulated by the 30S ribosomal subunit. The chain is Small ribosomal subunit biogenesis GTPase RsgA from Malacoplasma penetrans (strain HF-2) (Mycoplasma penetrans).